Reading from the N-terminus, the 202-residue chain is ATP-dependent Clp protease proteolytic subunit (202 aa).

The Nucleophile role is filled by S101. H126 is a catalytic residue.

It belongs to the peptidase S14 family. Component of the chloroplastic Clp protease core complex.

The protein resides in the plastid. It is found in the chloroplast stroma. The enzyme catalyses Hydrolysis of proteins to small peptides in the presence of ATP and magnesium. alpha-casein is the usual test substrate. In the absence of ATP, only oligopeptides shorter than five residues are hydrolyzed (such as succinyl-Leu-Tyr-|-NHMec, and Leu-Tyr-Leu-|-Tyr-Trp, in which cleavage of the -Tyr-|-Leu- and -Tyr-|-Trp bonds also occurs).. Cleaves peptides in various proteins in a process that requires ATP hydrolysis. Has a chymotrypsin-like activity. Plays a major role in the degradation of misfolded proteins. The polypeptide is ATP-dependent Clp protease proteolytic subunit (Acorus calamus (Sweet flag)).